Here is a 218-residue protein sequence, read N- to C-terminus: Small ribosomal subunit protein uS3c (218 aa).

One can recognise a KH type-2 domain in the interval 47–118 (VRRHMKNYSN…KLNISIAKVA (72 aa)).

The protein belongs to the universal ribosomal protein uS3 family. As to quaternary structure, part of the 30S ribosomal subunit.

It localises to the plastid. It is found in the chloroplast. The polypeptide is Small ribosomal subunit protein uS3c (rps3) (Ginkgo biloba (Ginkgo)).